Consider the following 748-residue polypeptide: Wings apart-like protein homolog 1 (748 aa).

Disordered regions lie at residues 23–199 and 614–644; these read TLAQ…VYAT and EGGC…RLDR. Low complexity predominate over residues 35 to 64; sequence PSVRSSDSPDVPDTPDVPVNQLSSPPLSLP. Polar residues-rich tracts occupy residues 68 to 79 and 87 to 96; these read SEGNAETLQNLS and LSQSSTSSLN. The span at 172–182 shows a compositional bias: low complexity; the sequence is ISSSSNRYSSR. Positions 205–723 constitute a WAPL domain; it reads KPLASGYGSR…KRLYDFTKAT (519 aa). A compositionally biased stretch (acidic residues) spans 616–633; sequence GCGDEEEEEEGGDESSDE. Residues 634-644 are compositionally biased toward basic and acidic residues; the sequence is DGVRKDGRLDR.

It belongs to the WAPL family.

The protein localises to the nucleus. In terms of biological role, regulator of meiotic chromosome structure and function, playing a role in sister chromatid cohesion, possibly via antagonizing the coh-3/-4 association with axial elements in nuclei during late prophase, cohesin association with chromatin, DNA double strand break repair and polar body positioning following meiotic divisions during oogenesis. Regulates the morphogenesis and temporal assembly of axial elements to control the organization of meiotic chromosomes in pachytene nuclei and is also involved in meiotic chromosomal remodeling in late pachytene nuclei. Required for the removal of the cohesin component scc-1 from mitotic chromosomes. This chain is Wings apart-like protein homolog 1, found in Caenorhabditis elegans.